The primary structure comprises 83 residues: uncharacterized protein (83 aa).

This is an uncharacterized protein from Bacillus subtilis (strain 168).